A 490-amino-acid polypeptide reads, in one-letter code: Bifunctional protein HldE (490 aa).

The segment at 1–330 (MLDFEAVLPA…RKVLPPASLA (330 aa)) is ribokinase. 205–208 (NRKE) lines the ATP pocket. Asp275 is a catalytic residue. The segment at 358–490 (FTNGCFDILH…LVARAQNGKA (133 aa)) is cytidylyltransferase.

The protein in the N-terminal section; belongs to the carbohydrate kinase PfkB family. This sequence in the C-terminal section; belongs to the cytidylyltransferase family. Homodimer.

It carries out the reaction D-glycero-beta-D-manno-heptose 7-phosphate + ATP = D-glycero-beta-D-manno-heptose 1,7-bisphosphate + ADP + H(+). It catalyses the reaction D-glycero-beta-D-manno-heptose 1-phosphate + ATP + H(+) = ADP-D-glycero-beta-D-manno-heptose + diphosphate. Its pathway is nucleotide-sugar biosynthesis; ADP-L-glycero-beta-D-manno-heptose biosynthesis; ADP-L-glycero-beta-D-manno-heptose from D-glycero-beta-D-manno-heptose 7-phosphate: step 1/4. The protein operates within nucleotide-sugar biosynthesis; ADP-L-glycero-beta-D-manno-heptose biosynthesis; ADP-L-glycero-beta-D-manno-heptose from D-glycero-beta-D-manno-heptose 7-phosphate: step 3/4. Catalyzes the phosphorylation of D-glycero-D-manno-heptose 7-phosphate at the C-1 position to selectively form D-glycero-beta-D-manno-heptose-1,7-bisphosphate. Its function is as follows. Catalyzes the ADP transfer from ATP to D-glycero-beta-D-manno-heptose 1-phosphate, yielding ADP-D-glycero-beta-D-manno-heptose. This chain is Bifunctional protein HldE, found in Rhodopseudomonas palustris (strain BisB18).